Here is a 104-residue protein sequence, read N- to C-terminus: UPF0213 protein plu4503 (104 aa).

Residues 4–79 (NQWVLYLLKT…KQLSKQQKER (76 aa)) form the GIY-YIG domain.

This sequence belongs to the UPF0213 family.

The chain is UPF0213 protein plu4503 from Photorhabdus laumondii subsp. laumondii (strain DSM 15139 / CIP 105565 / TT01) (Photorhabdus luminescens subsp. laumondii).